Reading from the N-terminus, the 242-residue chain is 2-amino-5-formylamino-6-ribosylaminopyrimidin-4(3H)-one 5'-monophosphate deformylase (242 aa).

The Fe cation site is built by Glu46, His48, Asp57, and His125.

It belongs to the creatininase superfamily. FAPy deformylase family. As to quaternary structure, homodimer. Requires Fe(2+) as cofactor. It depends on Zn(2+) as a cofactor.

It carries out the reaction 2-amino-5-formylamino-6-(5-phospho-D-ribosylamino)pyrimidin-4(3H)-one + H2O = 2,5-diamino-6-(1-D-ribosylamino)pyrimidin-4(3H)-one 5'-phosphate + formate + H(+). It participates in cofactor biosynthesis; coenzyme F420 biosynthesis. It functions in the pathway cofactor biosynthesis; riboflavin biosynthesis. Its function is as follows. Catalyzes the hydrolysis of the formamide of 2-amino-5-formylamino-6-ribosylamino-4(3H)-pyrimidinone 5'-monophosphate (FAPy) to form 2,5-diamino-6-ribosylamino-4(3H)-pyrimidinone 5'-phosphate (APy). The polypeptide is 2-amino-5-formylamino-6-ribosylaminopyrimidin-4(3H)-one 5'-monophosphate deformylase (Methanococcus aeolicus (strain ATCC BAA-1280 / DSM 17508 / OCM 812 / Nankai-3)).